The primary structure comprises 603 residues: Protein US26 (603 aa).

The span at 496 to 513 (EEEDQEEDDTSDDDDQEK) shows a compositional bias: acidic residues. 2 disordered regions span residues 496–536 (EEED…GSLE) and 549–568 (AVAE…DTAQ). The segment covering 517 to 533 (NPQNNIGSLTRTPSSPG) has biased composition (polar residues).

Belongs to the herpesviridae US22 family.

The polypeptide is Protein US26 (US26) (Human cytomegalovirus (strain Merlin) (HHV-5)).